Reading from the N-terminus, the 445-residue chain is Phosphoglucosamine mutase (445 aa).

Ser99 serves as the catalytic Phosphoserine intermediate. Residues Ser99, Asp242, Asp244, and Asp246 each contribute to the Mg(2+) site. Ser99 is subject to Phosphoserine.

The protein belongs to the phosphohexose mutase family. The cofactor is Mg(2+). Post-translationally, activated by phosphorylation.

The enzyme catalyses alpha-D-glucosamine 1-phosphate = D-glucosamine 6-phosphate. Functionally, catalyzes the conversion of glucosamine-6-phosphate to glucosamine-1-phosphate. The polypeptide is Phosphoglucosamine mutase (Campylobacter jejuni subsp. jejuni serotype O:2 (strain ATCC 700819 / NCTC 11168)).